Reading from the N-terminus, the 100-residue chain is NADH-quinone oxidoreductase subunit K (100 aa).

Helical transmembrane passes span 4-24 (LQHG…GLLI), 28-48 (LLFM…AFVV), and 60-80 (VMYI…LALL).

The protein belongs to the complex I subunit 4L family. As to quaternary structure, NDH-1 is composed of 13 different subunits. Subunits NuoA, H, J, K, L, M, N constitute the membrane sector of the complex.

The protein localises to the cell inner membrane. The catalysed reaction is a quinone + NADH + 5 H(+)(in) = a quinol + NAD(+) + 4 H(+)(out). Functionally, NDH-1 shuttles electrons from NADH, via FMN and iron-sulfur (Fe-S) centers, to quinones in the respiratory chain. The immediate electron acceptor for the enzyme in this species is believed to be ubiquinone. Couples the redox reaction to proton translocation (for every two electrons transferred, four hydrogen ions are translocated across the cytoplasmic membrane), and thus conserves the redox energy in a proton gradient. The protein is NADH-quinone oxidoreductase subunit K of Edwardsiella ictaluri (strain 93-146).